Here is a 505-residue protein sequence, read N- to C-terminus: 2,3-bisphosphoglycerate-independent phosphoglycerate mutase (505 aa).

Residues aspartate 15 and serine 65 each contribute to the Mn(2+) site. Serine 65 (phosphoserine intermediate) is an active-site residue. Residues histidine 126, 156–157 (RD), arginine 187, arginine 193, 260–263 (RPDR), and lysine 333 each bind substrate. The Mn(2+) site is built by aspartate 398, histidine 402, aspartate 439, histidine 440, and histidine 457.

The protein belongs to the BPG-independent phosphoglycerate mutase family. In terms of assembly, monomer. Requires Mn(2+) as cofactor.

The catalysed reaction is (2R)-2-phosphoglycerate = (2R)-3-phosphoglycerate. Its pathway is carbohydrate degradation; glycolysis; pyruvate from D-glyceraldehyde 3-phosphate: step 3/5. Functionally, catalyzes the interconversion of 2-phosphoglycerate and 3-phosphoglycerate. In Mycoplasmopsis pulmonis (strain UAB CTIP) (Mycoplasma pulmonis), this protein is 2,3-bisphosphoglycerate-independent phosphoglycerate mutase.